The following is a 115-amino-acid chain: Replication initiation control protein YabA (115 aa).

Residues His86, Cys88, Cys102, and Cys105 each coordinate Zn(2+).

It belongs to the YabA family. As to quaternary structure, homotetramer. Interacts with both DnaA and DnaN, acting as a bridge between these two proteins. Requires Zn(2+) as cofactor.

Its subcellular location is the cytoplasm. It localises to the nucleoid. Functionally, involved in control of chromosome replication initiation. Inhibits the cooperative binding of DnaA to the oriC region, thus negatively regulating initiation of chromosome replication. Inhibits the ability of DnaA-ATP to form a helix on DNA; does not disassemble preformed DnaA-DNA helices. Decreases the residence time of DnaA on the chromosome at its binding sites (oriC, replication forks and promoter-binding sites). Tethers DnaA to the replication machinery via the DNA polymerase beta sliding clamp subunit (dnaN). Associates with oriC and other DnaA targets on the chromosome in a DnaA-dependent manner. The chain is Replication initiation control protein YabA from Enterococcus faecalis (strain ATCC 700802 / V583).